Reading from the N-terminus, the 74-residue chain is Large ribosomal subunit protein bL31 (74 aa).

Positions 16, 18, 38, and 41 each coordinate Zn(2+).

The protein belongs to the bacterial ribosomal protein bL31 family. Type A subfamily. Part of the 50S ribosomal subunit. Zn(2+) is required as a cofactor.

Binds the 23S rRNA. This Streptomyces griseus subsp. griseus (strain JCM 4626 / CBS 651.72 / NBRC 13350 / KCC S-0626 / ISP 5235) protein is Large ribosomal subunit protein bL31.